Reading from the N-terminus, the 27-residue chain is Voltage-dependent anion-selective channel protein (27 aa).

The protein belongs to the eukaryotic mitochondrial porin family. Interacts with hexokinases. As to expression, photoreceptors.

The protein resides in the mitochondrion outer membrane. In terms of biological role, forms a channel through the cell membrane that allows diffusion of small hydrophilic molecules. This chain is Voltage-dependent anion-selective channel protein, found in Doryteuthis pealeii (Longfin inshore squid).